The following is a 311-amino-acid chain: Putative dihydroorotate dehydrogenase A (fumarate) (311 aa).

Substrate-binding positions include K45, 69 to 73 (NSMGL), and N128. 45–46 (KT) is a binding site for FMN. N128 lines the FMN pocket. The Nucleophile role is filled by C131. Positions 165 and 193 each coordinate FMN. 194–195 (NS) serves as a coordination point for substrate. Residues G220, 248-249 (GG), and 270-271 (GT) each bind FMN.

The protein belongs to the dihydroorotate dehydrogenase family. Type 1 subfamily. As to quaternary structure, homodimer. The cofactor is FMN.

Its subcellular location is the cytoplasm. The enzyme catalyses (S)-dihydroorotate + fumarate = orotate + succinate. The protein operates within pyrimidine metabolism; UMP biosynthesis via de novo pathway. Functionally, catalyzes the conversion of dihydroorotate to orotate with fumarate as the electron acceptor. The protein is Putative dihydroorotate dehydrogenase A (fumarate) (pyrD) of Streptococcus pyogenes serotype M3 (strain SSI-1).